A 130-amino-acid chain; its full sequence is Small ribosomal subunit protein uS11 (130 aa).

This sequence belongs to the universal ribosomal protein uS11 family. As to quaternary structure, part of the 30S ribosomal subunit. Interacts with proteins S7 and S18. Binds to IF-3.

Located on the platform of the 30S subunit, it bridges several disparate RNA helices of the 16S rRNA. Forms part of the Shine-Dalgarno cleft in the 70S ribosome. The protein is Small ribosomal subunit protein uS11 of Gluconobacter oxydans (strain 621H) (Gluconobacter suboxydans).